Consider the following 507-residue polypeptide: RNA-splicing ligase RtcB homolog (507 aa).

Residues aspartate 121, cysteine 124, histidine 229, histidine 261, and histidine 355 each coordinate Mn(2+). 228–232 (NHYAE) serves as a coordination point for GMP. GMP contacts are provided by residues 355-356 (HN), 404-407 (GGTM), serine 411, 430-433 (HGAG), and lysine 506. Catalysis depends on histidine 430, which acts as the GMP-histidine intermediate.

The protein belongs to the RtcB family. As to quaternary structure, catalytic component of the tRNA-splicing ligase complex. The cofactor is Mn(2+).

The catalysed reaction is a 3'-end 3'-phospho-ribonucleotide-RNA + a 5'-end dephospho-ribonucleoside-RNA + GTP = a ribonucleotidyl-ribonucleotide-RNA + GMP + diphosphate. It catalyses the reaction a 3'-end 2',3'-cyclophospho-ribonucleotide-RNA + a 5'-end dephospho-ribonucleoside-RNA + GTP + H2O = a ribonucleotidyl-ribonucleotide-RNA + GMP + diphosphate + H(+). In terms of biological role, catalytic subunit of the tRNA-splicing ligase complex that acts by directly joining spliced tRNA halves to mature-sized tRNAs by incorporating the precursor-derived splice junction phosphate into the mature tRNA as a canonical 3',5'-phosphodiester. May act as an RNA ligase with broad substrate specificity, and may function toward other RNAs. The protein is RNA-splicing ligase RtcB homolog of Micromonas pusilla (strain CCMP1545) (Picoplanktonic green alga).